Consider the following 255-residue polypeptide: UDP-2,3-diacylglucosamine hydrolase (255 aa).

5 residues coordinate Mn(2+): Asp8, His10, Asp41, Asn79, and His114. A substrate-binding site is contributed by 79 to 80; the sequence is NR. Substrate is bound by residues Asp122, Ser160, Asn164, Lys167, and His195. His195 and His197 together coordinate Mn(2+).

This sequence belongs to the LpxH family. Mn(2+) is required as a cofactor.

The protein resides in the cell inner membrane. The enzyme catalyses UDP-2-N,3-O-bis[(3R)-3-hydroxytetradecanoyl]-alpha-D-glucosamine + H2O = 2-N,3-O-bis[(3R)-3-hydroxytetradecanoyl]-alpha-D-glucosaminyl 1-phosphate + UMP + 2 H(+). It functions in the pathway glycolipid biosynthesis; lipid IV(A) biosynthesis; lipid IV(A) from (3R)-3-hydroxytetradecanoyl-[acyl-carrier-protein] and UDP-N-acetyl-alpha-D-glucosamine: step 4/6. Its function is as follows. Hydrolyzes the pyrophosphate bond of UDP-2,3-diacylglucosamine to yield 2,3-diacylglucosamine 1-phosphate (lipid X) and UMP by catalyzing the attack of water at the alpha-P atom. Involved in the biosynthesis of lipid A, a phosphorylated glycolipid that anchors the lipopolysaccharide to the outer membrane of the cell. In Hamiltonella defensa subsp. Acyrthosiphon pisum (strain 5AT), this protein is UDP-2,3-diacylglucosamine hydrolase.